An 898-amino-acid chain; its full sequence is Alanine--tRNA ligase (898 aa).

Residues His582, His586, Cys685, and His689 each contribute to the Zn(2+) site.

It belongs to the class-II aminoacyl-tRNA synthetase family. Zn(2+) is required as a cofactor.

It is found in the cytoplasm. It catalyses the reaction tRNA(Ala) + L-alanine + ATP = L-alanyl-tRNA(Ala) + AMP + diphosphate. Catalyzes the attachment of alanine to tRNA(Ala) in a two-step reaction: alanine is first activated by ATP to form Ala-AMP and then transferred to the acceptor end of tRNA(Ala). Also edits incorrectly charged Ser-tRNA(Ala) and Gly-tRNA(Ala) via its editing domain. This chain is Alanine--tRNA ligase, found in Mycolicibacterium gilvum (strain PYR-GCK) (Mycobacterium gilvum (strain PYR-GCK)).